The chain runs to 692 residues: Elongation factor G (692 aa).

Residues 8-282 (ENTRNIGIMA…AVIDYLPSPL (275 aa)) enclose the tr-type G domain. Residues 17 to 24 (AHIDAGKT), 81 to 85 (DTPGH), and 135 to 138 (NKMD) each bind GTP.

It belongs to the TRAFAC class translation factor GTPase superfamily. Classic translation factor GTPase family. EF-G/EF-2 subfamily.

Its subcellular location is the cytoplasm. In terms of biological role, catalyzes the GTP-dependent ribosomal translocation step during translation elongation. During this step, the ribosome changes from the pre-translocational (PRE) to the post-translocational (POST) state as the newly formed A-site-bound peptidyl-tRNA and P-site-bound deacylated tRNA move to the P and E sites, respectively. Catalyzes the coordinated movement of the two tRNA molecules, the mRNA and conformational changes in the ribosome. The polypeptide is Elongation factor G (Bacillus cytotoxicus (strain DSM 22905 / CIP 110041 / 391-98 / NVH 391-98)).